The following is a 1124-amino-acid chain: tRNA (34-2'-O)-methyltransferase regulator WDR6 (1124 aa).

Residue Met-1 is modified to N-acetylmethionine. WD repeat units follow at residues Met-53–Ile-97, Arg-105–Pro-143, Cys-147–Pro-189, Val-200–Val-238, Arg-247–His-285, Ile-289–Leu-327, Ser-335–Leu-376, Trp-381–Ile-422, Pro-425–Ala-470, Ile-476–Ser-520, Pro-557–Gly-596, Val-602–Pro-640, His-643–Ala-682, Leu-743–Val-789, Arg-852–Leu-897, Gln-905–Leu-950, Gly-974–Leu-1015, Glu-1039–Leu-1076, and Thr-1082–Asp-1124.

Belongs to the WD repeat WDR6 family. Interacts with FTSJ1; the interaction is direct, and required for 2'-O-methylation of position 34 in substrate tRNAs. Interacts with IRS4. Interacts with STK11/LKB1.

It localises to the cytoplasm. Functionally, together with methyltransferase FTSJ1, methylates the 2'-O-ribose of nucleotides at position 34 of the tRNA anticodon loop of substrate tRNAs. Required for the correct positioning of the substrate tRNA for methylation. Required to suppress amino acid starvation-induced autophagy. Enhances the STK11/LKB1-induced cell growth suppression activity. This chain is tRNA (34-2'-O)-methyltransferase regulator WDR6 (WDR6), found in Bos taurus (Bovine).